The following is a 459-amino-acid chain: Endoglucanase EG-1 (459 aa).

The N-terminal stretch at 1-22 is a signal peptide; it reads MAPSVTLPLTTAILAIARLVAA. Position 23 is a pyrrolidone carboxylic acid (Gln23). The catalytic stretch occupies residues 23–397; that stretch reads QQPGTSTPEV…DIGSTTNSTA (375 aa). Intrachain disulfides connect Cys41–Cys47, Cys71–Cys92, Cys82–Cys88, Cys161–Cys360, Cys193–Cys216, Cys197–Cys215, Cys236–Cys241, and Cys246–Cys315. Residue Asn78 is glycosylated (N-linked (GlcNAc) asparagine). The N-linked (GlcNAc...) (high mannose) asparagine glycan is linked to Asn204. Glu218 serves as the catalytic Nucleophile. Glu223 serves as the catalytic Proton donor/acceptor. Positions 390 to 425 are disordered; that stretch reads GSTTNSTAPPPPPASSTTFSTTRRSSTTSSSPSCTQ. Asn394 carries an N-linked (GlcNAc...) asparagine glycan. Residues 398–423 are linker; the sequence is PPPPPASSTTFSTTRRSSTTSSSPSC. Low complexity predominate over residues 404 to 425; that stretch reads SSTTFSTTRRSSTTSSSPSCTQ. 3 disulfide bridges follow: Cys423–Cys439, Cys431–Cys448, and Cys442–Cys458. One can recognise a CBM1 domain in the interval 423 to 459; the sequence is CTQTHWGQCGGIGYSGCKTCTSGTTCQYSNDYYSQCL.

The protein belongs to the glycosyl hydrolase 7 (cellulase C) family. Post-translationally, asn-204 contains mainly a high-mannose-type glycan (Hex(7-9)GlcNAc(2)), with a small fraction (8%) bearing a single GlcNAc at this site.

The protein localises to the secreted. The catalysed reaction is Endohydrolysis of (1-&gt;4)-beta-D-glucosidic linkages in cellulose, lichenin and cereal beta-D-glucans.. In terms of biological role, endoglucanase (EG) that cleaves the internal beta-1,4-glucosidic bonds in cellulose. The degradation of cellulose involves an interplay between different cellulolytic enzymes. Hydrolysis starts with EGs, which cut internal glycosidic linkages to reduce the polymerization degree of the substrate and creates new chain ends for exocellobiohydrolases (CBHs). The CBH release the disaccharide cellobiose from the non-reducing end of the cellulose polymer chain. Finally, beta-1,4-glucosidases hydrolyze the cellobiose and other short cello-oligosaccharides into glucose units. The chain is Endoglucanase EG-1 (egl1) from Hypocrea jecorina (Trichoderma reesei).